The primary structure comprises 339 residues: Sperm acrosome membrane-associated protein 6 (339 aa).

The first 41 residues, 1–41 (MTSQRSLSSPQTRRPSVMGLISLVGSIVLLFLLIFRASTWA), serve as a signal peptide directing secretion. A CXXC motif motif is present at residues 42–45 (CLFC). 6 cysteine pairs are disulfide-bonded: C42–C155, C45–C158, C56–C70, C140–C163, C144–C169, and C186–C241. Topologically, residues 42 to 310 (CLFCFTTYEE…NPQALTLGNL (269 aa)) are extracellular. The CXXC motif signature appears at 155–158 (CSGC). The region spanning 166–251 (PLDCPVQDML…VILHDQRPLA (86 aa)) is the Ig-like domain. The N-linked (GlcNAc...) asparagine glycan is linked to N258. The chain crosses the membrane as a helical span at residues 311–331 (FLLAATAALGSASVTLLVWLF). The Cytoplasmic segment spans residues 332–339 (FRWYLSGN).

Belongs to the SPACA6 family. As to quaternary structure, forms a complex with IZUMO1 and TMEM81 on spermatocyte cell membrane required for fertilization. As to expression, highly expressed in testis. Minor expression also detected in epididymis, seminal vesicle and ovary. Predominantly expressed in testicular germ cells during spermiogenesis. Most abundant in round spermatids and detected at lower levels in elongating spermatids.

The protein localises to the cytoplasmic vesicle. Its subcellular location is the secretory vesicle. The protein resides in the acrosome membrane. In terms of biological role, sperm protein required for fusion of sperm with the egg membrane during fertilization. May regulate the expression of sperm surface protein DCST2. This chain is Sperm acrosome membrane-associated protein 6, found in Mus musculus (Mouse).